We begin with the raw amino-acid sequence, 244 residues long: Protein TIFY 10b (244 aa).

In terms of domain architecture, Tify spans 97–132 (QEPEKRQLTIFYGGKVLVFNDFPADKAKGLMQLASK). Positions 174-244 (QKPARANASD…AVVKPIERGQ (71 aa)) are disordered. The Jas motif lies at 185 to 210 (PIARKASLHRFLEKRKDRLNAKTPYQ). The Nuclear localization signal signature appears at 187–194 (ARKASLHR). Positions 194–204 (RFLEKRKDRLN) are enriched in basic and acidic residues.

This sequence belongs to the TIFY/JAZ family. Interacts with BHLH148. Interacts with COI1A and COI1B in a coronatine-dependent manner. Coronatine is an analog of jasmonoyl isoleucine (JA-Ile). In terms of processing, ubiquitinated. Targeted for degradation by the SCF(COI1) E3 ubiquitin ligase-proteasome pathway during jasmonate signaling.

It localises to the nucleus. Repressor of jasmonate responses. This is Protein TIFY 10b from Oryza sativa subsp. japonica (Rice).